An 812-amino-acid chain; its full sequence is Valine--tRNA ligase (812 aa).

The short motif at 46 to 56 is the 'HIGH' region element; that stretch reads PTVSGQLHIGH. The 'KMSKS' region motif lies at 536 to 540; sequence KMSKS. Position 539 (K539) interacts with ATP.

This sequence belongs to the class-I aminoacyl-tRNA synthetase family. ValS type 2 subfamily. As to quaternary structure, monomer.

The protein resides in the cytoplasm. The catalysed reaction is tRNA(Val) + L-valine + ATP = L-valyl-tRNA(Val) + AMP + diphosphate. Catalyzes the attachment of valine to tRNA(Val). As ValRS can inadvertently accommodate and process structurally similar amino acids such as threonine, to avoid such errors, it has a 'posttransfer' editing activity that hydrolyzes mischarged Thr-tRNA(Val) in a tRNA-dependent manner. The polypeptide is Valine--tRNA ligase (Rickettsia bellii (strain RML369-C)).